The following is a 135-amino-acid chain: Transcription antitermination protein NusB (135 aa).

It belongs to the NusB family.

Functionally, involved in transcription antitermination. Required for transcription of ribosomal RNA (rRNA) genes. Binds specifically to the boxA antiterminator sequence of the ribosomal RNA (rrn) operons. This is Transcription antitermination protein NusB from Lacticaseibacillus paracasei (strain ATCC 334 / BCRC 17002 / CCUG 31169 / CIP 107868 / KCTC 3260 / NRRL B-441) (Lactobacillus paracasei).